The primary structure comprises 447 residues: NADH-quinone oxidoreductase subunit F (447 aa).

61–70 (GRGGAGFSTG) provides a ligand contact to NAD(+). 174-221 (GAGRYICGEETALINSLEGRRANPRAKPPFPAVFGLWGKPTCVNNVET) serves as a coordination point for FMN. Residues cysteine 352, cysteine 355, cysteine 358, and cysteine 399 each coordinate [4Fe-4S] cluster.

The protein belongs to the complex I 51 kDa subunit family. As to quaternary structure, composed of 13 different subunits. Subunits NuoCD, E, F, and G constitute the peripheral sector of the complex. [4Fe-4S] cluster serves as cofactor. Requires FMN as cofactor.

The catalysed reaction is a quinone + NADH + 5 H(+)(in) = a quinol + NAD(+) + 4 H(+)(out). Functionally, NDH-1 shuttles electrons from NADH, via FMN and iron-sulfur (Fe-S) centers, to quinones in the respiratory chain. Couples the redox reaction to proton translocation (for every two electrons transferred, four hydrogen ions are translocated across the cytoplasmic membrane), and thus conserves the redox energy in a proton gradient. The polypeptide is NADH-quinone oxidoreductase subunit F (nuoF) (Buchnera aphidicola subsp. Schizaphis graminum (strain Sg)).